The sequence spans 380 residues: MSWSFLTRLLDEISNHSTFVGKIWLTLFIIFRIVLTVVGGESIYYDEQSKFVCNTQQPGCENVCYDAFAPLSHVRFWVFQIILITTPTIMYLGFAMHKIARSNDVEYRPVNRKRMPMINRGRNRDYEEAEDNGEEDPMIMEEIVPEKEKAPEKSAVKHDGRRRIKRDGLMKVYILQLLSRIIFEVGFLFGQYILYGFEVAPSYVCTRSPCPHTVDCFVSRPTEKTIFLLIMYAVSCLCLSLTVLEILHLGLSGIRDAFRRRARHQSVQRPRAPICRQVPTAPPGYHTALKKDKLSLGMKPEYNLDSGRESFGDESSSRDIDRLRRHLKLAQQHLDLAYQNGESSPSRSSSPESNGTAVEQNRLNFAQEKQGSKCEKGIHA.

Residues 1-22 (MSWSFLTRLLDEISNHSTFVGK) lie on the Cytoplasmic side of the membrane. The helical transmembrane segment at 23 to 45 (IWLTLFIIFRIVLTVVGGESIYY) threads the bilayer. Topologically, residues 46–75 (DEQSKFVCNTQQPGCENVCYDAFAPLSHVR) are extracellular. The helical transmembrane segment at 76–95 (FWVFQIILITTPTIMYLGFA) threads the bilayer. Residues 96–171 (MHKIARSNDV…RRIKRDGLMK (76 aa)) are Cytoplasmic-facing. Residues 172-194 (VYILQLLSRIIFEVGFLFGQYIL) form a helical membrane-spanning segment. The Extracellular portion of the chain corresponds to 195–228 (YGFEVAPSYVCTRSPCPHTVDCFVSRPTEKTIFL). The chain crosses the membrane as a helical span at residues 229–251 (LIMYAVSCLCLSLTVLEILHLGL). Over 252–380 (SGIRDAFRRR…GSKCEKGIHA (129 aa)) the chain is Cytoplasmic. The disordered stretch occupies residues 337–380 (AYQNGESSPSRSSSPESNGTAVEQNRLNFAQEKQGSKCEKGIHA). Positions 342–353 (ESSPSRSSSPES) are enriched in low complexity. The segment covering 354 to 369 (NGTAVEQNRLNFAQEK) has biased composition (polar residues). A compositionally biased stretch (basic and acidic residues) spans 370–380 (QGSKCEKGIHA).

The protein belongs to the connexin family. Gamma-type subfamily. As to quaternary structure, a connexon is composed of a hexamer of connexins.

The protein resides in the cell membrane. Its subcellular location is the cell junction. It is found in the gap junction. Its function is as follows. One gap junction consists of a cluster of closely packed pairs of transmembrane channels, the connexons, through which materials of low MW diffuse from one cell to a neighboring cell. Participates in a developmental pathway for formation of the notochord and tail. The polypeptide is Gap junction gamma-1 protein (gjc1) (Danio rerio (Zebrafish)).